A 209-amino-acid chain; its full sequence is Ribosomal RNA large subunit methyltransferase E (209 aa).

S-adenosyl-L-methionine is bound by residues Gly-63, Trp-65, Asp-83, Asp-99, and Asp-124. Lys-164 (proton acceptor) is an active-site residue.

The protein belongs to the class I-like SAM-binding methyltransferase superfamily. RNA methyltransferase RlmE family.

The protein resides in the cytoplasm. It catalyses the reaction uridine(2552) in 23S rRNA + S-adenosyl-L-methionine = 2'-O-methyluridine(2552) in 23S rRNA + S-adenosyl-L-homocysteine + H(+). Its function is as follows. Specifically methylates the uridine in position 2552 of 23S rRNA at the 2'-O position of the ribose in the fully assembled 50S ribosomal subunit. This is Ribosomal RNA large subunit methyltransferase E from Serratia proteamaculans (strain 568).